The sequence spans 159 residues: Large ribosomal subunit protein bL17 (159 aa).

Residues 124-135 (EANRATRAAASK) show a composition bias toward low complexity. Residues 124-159 (EANRATRAAASKQAEEAKAEEAEATEAEAEETTEEK) are disordered. The span at 145–159 (AEATEAEAEETTEEK) shows a compositional bias: acidic residues.

The protein belongs to the bacterial ribosomal protein bL17 family. Part of the 50S ribosomal subunit. Contacts protein L32.

This Corynebacterium aurimucosum (strain ATCC 700975 / DSM 44827 / CIP 107346 / CN-1) (Corynebacterium nigricans) protein is Large ribosomal subunit protein bL17.